The following is a 326-amino-acid chain: N-acetyl-gamma-glutamyl-phosphate reductase (326 aa).

The active site involves Cys-155.

It belongs to the NAGSA dehydrogenase family. Type 1 subfamily.

Its subcellular location is the cytoplasm. The catalysed reaction is N-acetyl-L-glutamate 5-semialdehyde + phosphate + NADP(+) = N-acetyl-L-glutamyl 5-phosphate + NADPH + H(+). It participates in amino-acid biosynthesis; L-arginine biosynthesis; N(2)-acetyl-L-ornithine from L-glutamate: step 3/4. In terms of biological role, catalyzes the NADPH-dependent reduction of N-acetyl-5-glutamyl phosphate to yield N-acetyl-L-glutamate 5-semialdehyde. In Shewanella frigidimarina (strain NCIMB 400), this protein is N-acetyl-gamma-glutamyl-phosphate reductase.